Consider the following 396-residue polypeptide: Phosphoglycerate kinase (396 aa).

Substrate contacts are provided by residues 23–25 (DFN), R38, 61–64 (HMGK), R122, and R155. ATP-binding positions include K206, G296, E327, and 353 to 356 (GGDS).

The protein belongs to the phosphoglycerate kinase family. As to quaternary structure, monomer.

The protein resides in the cytoplasm. The catalysed reaction is (2R)-3-phosphoglycerate + ATP = (2R)-3-phospho-glyceroyl phosphate + ADP. The protein operates within carbohydrate degradation; glycolysis; pyruvate from D-glyceraldehyde 3-phosphate: step 2/5. This chain is Phosphoglycerate kinase, found in Clostridium botulinum (strain Alaska E43 / Type E3).